A 648-amino-acid chain; its full sequence is Bifunctional lysine-specific demethylase and histidyl-hydroxylase NO66 (648 aa).

Residues 1–168 (MSKVSSIFDT…KGAKAAKKNK (168 aa)) are disordered. Residues 17-28 (PATTENGAAAKP) are compositionally biased toward low complexity. The segment covering 109-119 (DHRKHKEKLRK) has biased composition (basic residues). Residues 123 to 137 (GVENSRQAAASTSML) are compositionally biased toward polar residues. Positions 155–168 (PVHHKGAKAAKKNK) are enriched in basic residues. The JmjC domain occupies 308 to 453 (CSIRMLNPQT…DLLELYLPHA (146 aa)). Fe cation-binding residues include His354, Asp356, and His419.

The protein belongs to the ROX family. NO66 subfamily. It depends on Fe(2+) as a cofactor.

Its subcellular location is the nucleus. It carries out the reaction N(6),N(6)-dimethyl-L-lysyl(36)-[histone H3] + 2 2-oxoglutarate + 2 O2 = L-lysyl(36)-[histone H3] + 2 formaldehyde + 2 succinate + 2 CO2. In terms of biological role, oxygenase that can act as both a histone lysine demethylase and a ribosomal histidine hydroxylase. Specifically demethylates 'Lys-4' (H3K4me) and 'Lys-36' (H3K36me) of histone H3, thereby playing a central role in histone code. The sequence is that of Bifunctional lysine-specific demethylase and histidyl-hydroxylase NO66 from Culex quinquefasciatus (Southern house mosquito).